The chain runs to 396 residues: 3-amino-4-hydroxybenzoic acid synthase (396 aa).

The disordered stretch occupies residues 1–29; that stretch reads MSSSPSPSPSSSSSSSASSSASSSPSSSS.

Belongs to the archaeal-type DHQ synthase family. GriH subfamily. Monomer. Mn(2+) serves as cofactor.

The enzyme catalyses 2-amino-4,5-dihydroxy-6-oxo-7-(phosphooxy)heptanoate = 3-amino-4-hydroxybenzoate + phosphate + 2 H2O + H(+). Catalyzes the cyclization of 2-amino-4,5-dihydroxy-6-one-heptanoic acid-7-phosphate to yield 3-amino-4-hydroxybenzoic acid (3,4-AHBA). The polypeptide is 3-amino-4-hydroxybenzoic acid synthase (griH) (Streptomyces griseus subsp. griseus (strain JCM 4626 / CBS 651.72 / NBRC 13350 / KCC S-0626 / ISP 5235)).